Consider the following 287-residue polypeptide: MAEITAALVKELRERTGQGMMECKKALVAAGGDIEKAIDDMRASGAIKAAKKAGNIAAEGSIAVRVEGGRGVIIEVNSQTDFLALQDDFKAFVKESIDEAFEKNLTEAAPLIASRESAREALVAKCGENVNIRRLTAVSGETVGAYLHGHRIGVLVVLKGGNDELAKHVAMHVAASNPAVVSPDQVSEELVAKEKEIFLQLNAEKIAGKPENIVENMVKGRIAKFLAEASLVEQAFIMDPEVKVGDLVKKAGAEVVSFVRYEVGEGIEKAETDFAAEVAAQVAASKQ.

Residues 80 to 83 (TDFL) form an involved in Mg(2+) ion dislocation from EF-Tu region.

This sequence belongs to the EF-Ts family.

The protein resides in the cytoplasm. Functionally, associates with the EF-Tu.GDP complex and induces the exchange of GDP to GTP. It remains bound to the aminoacyl-tRNA.EF-Tu.GTP complex up to the GTP hydrolysis stage on the ribosome. In Ectopseudomonas mendocina (strain ymp) (Pseudomonas mendocina), this protein is Elongation factor Ts.